A 427-amino-acid polypeptide reads, in one-letter code: Putative transporter YdfJ (427 aa).

The Cytoplasmic portion of the chain corresponds to 1 to 7; it reads MDFQLYS. 2 helical membrane-spanning segments follow: residues 8 to 28 and 29 to 49; these read LGAA…AMAL and ILAM…AFIF. At 50-74 the chain is on the cytoplasmic side; the sequence is GKMGDRIGRKKVLFITITMMGICTT. The chain crosses the membrane as a helical span at residues 75–95; that stretch reads LIGVLPTYAQIGVFAPILLVT. Residues 96–97 lie on the Periplasmic side of the membrane; sequence LR. Residues 98–118 form a helical membrane-spanning segment; the sequence is IIQGLGAGAEISGAGTMLAEY. Over 119–132 the chain is Cytoplasmic; it reads APKGKRGIISSFVA. A helical membrane pass occupies residues 133–153; that stretch reads MGTNCGTLSATAIWAFMFFIL. The Periplasmic portion of the chain corresponds to 154–157; sequence SKEE. The chain crosses the membrane as a helical span at residues 158–178; that stretch reads LLAWGWRIPFLASVVVMVFAI. Over 179 to 225 the chain is Cytoplasmic; sequence WLRMNLKESPVFEKVNDSNQPTAKPAPAGSMFQSKSFWLATGLRFGQ. Residues 226 to 246 traverse the membrane as a helical segment; sequence AGNSGLIQTFLAGYLVQTLLF. Over 247–251 the chain is Periplasmic; the sequence is NKAIP. The helical transmembrane segment at 252 to 272 threads the bilayer; it reads TDALMISSILGFMTIPFLGWL. Over 273 to 279 the chain is Cytoplasmic; that stretch reads SDKIGRR. A helical transmembrane segment spans residues 280-300; that stretch reads IPYIIMNTSAIVLAWPMLSII. At 301-307 the chain is on the periplasmic side; that stretch reads VDKSYAP. A helical transmembrane segment spans residues 308–328; it reads STIMVALIVIHNCAVLGLFAL. The Cytoplasmic portion of the chain corresponds to 329–351; sequence ENITMAEMFGCKNRFTRMAISKE. The helical transmembrane segment at 352-372 threads the bilayer; the sequence is IGGLIASGFGPILAGIFCTMT. Position 373 (Glu373) is a topological domain, periplasmic. A helical membrane pass occupies residues 374–394; that stretch reads SWYPIAIMIMAYSVIGLISAL. The Cytoplasmic segment spans residues 395–427; that stretch reads KMPEVKDRDLSALEDAAEDQPRVVRAAQPSRSL.

The protein belongs to the major facilitator superfamily. Metabolite:H+ Symporter (MHS) family (TC 2.A.1.6) family.

Its subcellular location is the cell inner membrane. Functionally, when overexpressed in human HEK-293 cells forms an inward rectifying potassium channel. The polypeptide is Putative transporter YdfJ (ydfJ) (Escherichia coli (strain K12)).